We begin with the raw amino-acid sequence, 284 residues long: 8-methylmenaquinol:fumarate reductase membrane anchor subunit (284 aa).

As to quaternary structure, the MFR complex is composed of three subunits: a flavoprotein (SdhA), an iron-sulfur protein (SdhB), and one hydrophobic anchor protein (SdhE).

It localises to the periplasm. It is found in the cell membrane. It carries out the reaction 8-methylmenaquinone-6 + succinate = 8-methylmenaquinol-6 + fumarate. Membrane anchor subunit of 8-methylmenaquinol:fumarate reductase (MFR), that catalyzes the reduction of fumarate using 8-methylmenaquinol-6 as electron donor. The complex shows no succinate oxidation activity. Is involved in anaerobic metabolism. SdhE likely contains the quinol/quinone binding site. This Wolinella succinogenes (strain ATCC 29543 / DSM 1740 / CCUG 13145 / JCM 31913 / LMG 7466 / NCTC 11488 / FDC 602W) (Vibrio succinogenes) protein is 8-methylmenaquinol:fumarate reductase membrane anchor subunit.